The sequence spans 1286 residues: DNA-directed RNA polymerase 147 kDa polypeptide (1286 aa).

The protein belongs to the poxviridae DNA-directed RNA polymerase 147 kDa subunit family. The DNA-dependent RNA polymerase used for intermediate and late genes expression consists of eight subunits Rpo30/OPG66, Rpo7/OPG90, Rpo22/OPG103, Rpo147/OPG105, Rpo18/OPG119, Rpo19/OPG131, Rpo132/OPG151 and Rpo35/OPG156. The same holoenzyme, with the addition of the transcription-specificity factor OPG109, is used for early gene expression.

It localises to the virion. It carries out the reaction RNA(n) + a ribonucleoside 5'-triphosphate = RNA(n+1) + diphosphate. Functionally, part of the DNA-dependent RNA polymerase which catalyzes the transcription of viral DNA into RNA using the four ribonucleoside triphosphates as substrates. Responsible for the transcription of early, intermediate and late genes. DNA-dependent RNA polymerase associates with the early transcription factor (ETF), itself composed of OPG118 and OPG133, thereby allowing the early genes transcription. Late transcription, and probably also intermediate transcription, require newly synthesized RNA polymerase. In Monkeypox virus, this protein is DNA-directed RNA polymerase 147 kDa polypeptide (OPG105).